Reading from the N-terminus, the 224-residue chain is Probable 2' cyclic ADP-D-ribose synthase BdTIR (224 aa).

The TIR domain maps to 51–178 (SRYEVFINHR…RFKFALREAK (128 aa)). Residues 60–65 (RGVDTK) and Gly93 each bind NAD(+). Glu127 is an active-site residue.

In terms of assembly, homodimer.

It catalyses the reaction NAD(+) + H2O = ADP-D-ribose + nicotinamide + H(+). The enzyme catalyses NADP(+) + H2O = ADP-D-ribose 2'-phosphate + nicotinamide + H(+). It carries out the reaction NAD(+) = 2'cADPR + nicotinamide + H(+). Functionally, an NAD(+) hydrolase (NADase). Upon activation catalyzes cleavage of NAD(+) into ADP-D-ribose (ADPR) and nicotinamide; NAD(+) cleavage triggers a defense system that promotes cell death. In addition to ADPR, also generates a cyclization variant of cyclic ADPR termed v-cADPR (2'cADPR). Also hydrolyzes NADP(+), but not other NAD(+)-related molecules. v-cADPR activates ThsA, an NAD(+) hydrolase in B.cereus (AC J8G6Z1). Probably makes 2'cADPR; the cADPR made by this protein is bound by cmTad1 (AC P0DW61) and activates ThsA from B.cereus. Boiling cmTad1 bound to the cyclic nucleotide releases 2'cADPR, strongly suggesting it is the product of this protein. This Brachypodium distachyon (Purple false brome) protein is Probable 2' cyclic ADP-D-ribose synthase BdTIR.